Consider the following 72-residue polypeptide: Crustacean hyperglycemic hormone (72 aa).

Q1 is subject to Pyrrolidone carboxylic acid. F3 is subject to D-phenylalanine; in form CHH-II. 3 disulfides stabilise this stretch: C7–C43, C23–C39, and C26–C52. Residue V72 is modified to Valine amide.

In terms of processing, stereoinversion of L-Phe (in CHH-I) to D-Phe (in CHH-II) the two forms are present in a ratio 3:1 (CHH-I/CHH-II). Produced by the medulla terminalis X-organ in the eyestalks and transported to the sinus gland where they are stored and released.

The protein resides in the secreted. In terms of biological role, hormone found in the sinus gland of isopods and decapods which controls the blood sugar level. Has a secretagogue action over the amylase released from the midgut gland. May act as a stress hormone and may be involved in the control of molting and reproduction. This chain is Crustacean hyperglycemic hormone, found in Procambarus bouvieri (Mexican crayfish).